The sequence spans 442 residues: Histidinol dehydrogenase (442 aa).

Residues Y142, Q204, and N227 each coordinate NAD(+). Substrate-binding residues include S250, Q272, and H275. Positions 272 and 275 each coordinate Zn(2+). Active-site proton acceptor residues include E340 and H341. The substrate site is built by H341, D374, E428, and H433. Residue D374 coordinates Zn(2+). Zn(2+) is bound at residue H433.

It belongs to the histidinol dehydrogenase family. The cofactor is Zn(2+).

The enzyme catalyses L-histidinol + 2 NAD(+) + H2O = L-histidine + 2 NADH + 3 H(+). The protein operates within amino-acid biosynthesis; L-histidine biosynthesis; L-histidine from 5-phospho-alpha-D-ribose 1-diphosphate: step 9/9. In terms of biological role, catalyzes the sequential NAD-dependent oxidations of L-histidinol to L-histidinaldehyde and then to L-histidine. This is Histidinol dehydrogenase from Prochlorococcus marinus (strain MIT 9313).